Here is a 429-residue protein sequence, read N- to C-terminus: Chordin-like protein 2 (429 aa).

Positions 1–25 (MVPEVRVLSSLLGLALLWFPLDSHA) are cleaved as a signal peptide. 2 VWFC domains span residues 31 to 96 (MFCL…PKCV) and 109 to 175 (KSCQ…QACK). N-linked (GlcNAc...) asparagine glycosylation occurs at Asn-114. A Phosphoserine; by FAM20C modification is found at Ser-182. The tract at residues 182 to 224 (SDEEDSVQSLHGVRHPQDPCSSDAGRKRGPGTPAPTGLSAPLS) is disordered. The region spanning 250–315 (KACVHGGKTY…VAGKCCKICP (66 aa)) is the VWFC 3 domain.

As to quaternary structure, interacts with GDF5. May interact with BMP2, BMP4, BMP5, BMP6, BMP7 and INHBA. Post-translationally, phosphorylated by FAM20C in the extracellular medium. As to expression, highly expressed in uterus. Moderately expressed in heart, liver, prostate, testis and ovary. Weakly expressed in skeletal muscle, kidney, spleen, small intestine and colon. Expressed in the secretory epithelial cells of uterine endometrium, fallopian tubes, endocervical glands, bladder and prostate, as well as the transitional epithelium of the urinary bladder, and in bone osteoblasts (at protein level). In normal cartilage, expression was confined in a few chondrocytes in the superficial zone as well as in the middle zone. In diseased cartilage coming from osteoarthritic patients, expression was limited to the middle zone of chondrocytes. Isoform 1 and isoform 2 are expressed in fetal cerebellum and heart, while only isoform 2 is detected in fetal spleen. Isoform 2 present in plasma.

It localises to the secreted. Its subcellular location is the cytoplasm. May inhibit BMPs activity by blocking their interaction with their receptors. Has a negative regulator effect on the cartilage formation/regeneration from immature mesenchymal cells, by preventing or reducing the rate of matrix accumulation. Implicated in tumor angiogenesis. May play a role during myoblast and osteoblast differentiation, and maturation. The chain is Chordin-like protein 2 (CHRDL2) from Homo sapiens (Human).